Consider the following 854-residue polypeptide: Translation initiation factor IF-2 (854 aa).

A compositionally biased stretch (basic residues) spans 61 to 72 (KNIKTPTAKKPK). 2 disordered regions span residues 61-115 (KNIK…LASA) and 167-186 (ESLKKKKKEKKSFVASKKES). A compositionally biased stretch (basic and acidic residues) spans 73–108 (KENAKDQEKLNESEKKEPKKEESKEQEKQEIIDTHK). A tr-type G domain is found at 353–520 (TRAPVITIMG…IVLLQADILE (168 aa)). Positions 362-369 (GHVDHGKT) are G1. 362–369 (GHVDHGKT) is a binding site for GTP. Residues 387-391 (GITQH) form a G2 region. The G3 stretch occupies residues 408 to 411 (DTPG). Residues 408-412 (DTPGH) and 462-465 (NKMD) contribute to the GTP site. The interval 462–465 (NKMD) is G4. The segment at 498-500 (SAK) is G5.

Belongs to the TRAFAC class translation factor GTPase superfamily. Classic translation factor GTPase family. IF-2 subfamily.

It localises to the cytoplasm. One of the essential components for the initiation of protein synthesis. Protects formylmethionyl-tRNA from spontaneous hydrolysis and promotes its binding to the 30S ribosomal subunits. Also involved in the hydrolysis of GTP during the formation of the 70S ribosomal complex. This is Translation initiation factor IF-2 from Campylobacter jejuni subsp. doylei (strain ATCC BAA-1458 / RM4099 / 269.97).